Reading from the N-terminus, the 261-residue chain is 1,6-dihydroxycyclohexa-2,4-diene-1-carboxylate dehydrogenase (261 aa).

13 to 37 (IVTGAAQGIGRGVALRIAQEGGCLI) lines the NAD(+) pocket. A substrate-binding site is contributed by S145. The active-site Proton acceptor is Y156.

Belongs to the short-chain dehydrogenases/reductases (SDR) family. In terms of assembly, homodimer.

It catalyses the reaction (1R,6S)-1,6-dihydroxycyclohexa-2,4-diene-1-carboxylate + NAD(+) = catechol + CO2 + NADH. It participates in aromatic compound metabolism; benzoate degradation via hydroxylation; catechol from benzoate: step 2/2. Functionally, degradation of 2-hydro-1,2-dihydroxy benzoate (DHB) to catechol. This is 1,6-dihydroxycyclohexa-2,4-diene-1-carboxylate dehydrogenase (benD) from Acinetobacter baylyi (strain ATCC 33305 / BD413 / ADP1).